The chain runs to 81 residues: Photosystem I iron-sulfur center (81 aa).

2 consecutive 4Fe-4S ferredoxin-type domains span residues 2 to 31 and 39 to 68; these read SHTV…MVPW and IASS…IRVY. C11, C14, C17, C21, C48, C51, C54, and C58 together coordinate [4Fe-4S] cluster.

As to quaternary structure, the cyanobacterial PSI reaction center is composed of one copy each of PsaA,B,C,D,E,F,I,J,K,L,M and X, and forms trimeric complexes. The cofactor is [4Fe-4S] cluster.

It is found in the cellular thylakoid membrane. It catalyses the reaction reduced [plastocyanin] + hnu + oxidized [2Fe-2S]-[ferredoxin] = oxidized [plastocyanin] + reduced [2Fe-2S]-[ferredoxin]. In terms of biological role, apoprotein for the two 4Fe-4S centers FA and FB of photosystem I (PSI); essential for photochemical activity. FB is the terminal electron acceptor of PSI, donating electrons to ferredoxin. The C-terminus interacts with PsaA/B/D and helps assemble the protein into the PSI complex. Required for binding of PsaD and PsaE to PSI. PSI is a plastocyanin/cytochrome c6-ferredoxin oxidoreductase, converting photonic excitation into a charge separation, which transfers an electron from the donor P700 chlorophyll pair to the spectroscopically characterized acceptors A0, A1, FX, FA and FB in turn. The sequence is that of Photosystem I iron-sulfur center from Mastigocladus laminosus (Fischerella sp.).